We begin with the raw amino-acid sequence, 27 residues long: uncharacterized protein (27 aa).

This is an uncharacterized protein from Escherichia coli (strain K12).